Consider the following 133-residue polypeptide: Small ribosomal subunit protein eS24 (133 aa).

M1 bears the N-acetylmethionine mark. Position 9 is a phosphothreonine (T9). K37 is covalently cross-linked (Glycyl lysine isopeptide (Lys-Gly) (interchain with G-Cter in SUMO2)). The segment at 92 to 133 is disordered; the sequence is ARHGLYEKKKTSRKQRKERKNRMKKVRGTAKANVGAGKKPKE. Over residues 101–119 the composition is skewed to basic residues; that stretch reads KTSRKQRKERKNRMKKVRG.

Belongs to the eukaryotic ribosomal protein eS24 family. As to quaternary structure, component of the small ribosomal subunit. Part of the small subunit (SSU) processome, composed of more than 70 proteins and the RNA chaperone small nucleolar RNA (snoRNA) U3.

The protein localises to the cytoplasm. Its subcellular location is the nucleus. It is found in the nucleolus. In terms of biological role, component of the small ribosomal subunit. The ribosome is a large ribonucleoprotein complex responsible for the synthesis of proteins in the cell. Required for processing of pre-rRNA and maturation of 40S ribosomal subunits. Part of the small subunit (SSU) processome, first precursor of the small eukaryotic ribosomal subunit. During the assembly of the SSU processome in the nucleolus, many ribosome biogenesis factors, an RNA chaperone and ribosomal proteins associate with the nascent pre-rRNA and work in concert to generate RNA folding, modifications, rearrangements and cleavage as well as targeted degradation of pre-ribosomal RNA by the RNA exosome. The chain is Small ribosomal subunit protein eS24 (RPS24) from Oryctolagus cuniculus (Rabbit).